A 225-amino-acid polypeptide reads, in one-letter code: Small ribosomal subunit protein eS1 (225 aa).

A compositionally biased stretch (acidic residues) spans 206 to 216 (PVEEPAAEEVA). The tract at residues 206–225 (PVEEPAAEEVAEAPAAETQE) is disordered.

Belongs to the eukaryotic ribosomal protein eS1 family.

The sequence is that of Small ribosomal subunit protein eS1 from Methanococcus maripaludis (strain C5 / ATCC BAA-1333).